We begin with the raw amino-acid sequence, 645 residues long: Threonine--tRNA ligase (645 aa).

In terms of domain architecture, TGS spans 3–64 (DMINITFPDG…EQDGTITIVT (62 aa)). A catalytic region spans residues 247-544 (DHRKLGKELG…LLEEYKGAFP (298 aa)). Residues C340, H391, and H521 each contribute to the Zn(2+) site.

The protein belongs to the class-II aminoacyl-tRNA synthetase family. Homodimer. Requires Zn(2+) as cofactor.

It is found in the cytoplasm. It catalyses the reaction tRNA(Thr) + L-threonine + ATP = L-threonyl-tRNA(Thr) + AMP + diphosphate + H(+). Functionally, catalyzes the attachment of threonine to tRNA(Thr) in a two-step reaction: L-threonine is first activated by ATP to form Thr-AMP and then transferred to the acceptor end of tRNA(Thr). Also edits incorrectly charged L-seryl-tRNA(Thr). This chain is Threonine--tRNA ligase, found in Halalkalibacterium halodurans (strain ATCC BAA-125 / DSM 18197 / FERM 7344 / JCM 9153 / C-125) (Bacillus halodurans).